The chain runs to 415 residues: Levansucrase (415 aa).

5 residues coordinate sucrose: W45, D46, A132, R202, and D203. D46 acts as the Nucleophile in catalysis. E287 serves as the catalytic Proton donor/acceptor.

It belongs to the glycosyl hydrolase 68 family.

It localises to the secreted. It carries out the reaction [6)-beta-D-fructofuranosyl-(2-&gt;](n) alpha-D-glucopyranoside + sucrose = [6)-beta-D-fructofuranosyl-(2-&gt;](n+1) alpha-D-glucopyranoside + D-glucose. Functionally, catalyzes the synthesis of levan, a fructose polymer, by transferring the fructosyl moiety from sucrose to a growing acceptor molecule. The chain is Levansucrase from Erwinia amylovora (Fire blight bacteria).